Consider the following 252-residue polypeptide: Neurexophilin-3 (252 aa).

The signal sequence occupies residues 1–22 (MQLTRCCFVFLVQGSLYLVICG). Positions 23–75 (QDDGPPGSEDPEHDDHEGQPRPRVPRKRGHISPKSRPLANSTLLGLLAPPGEV) are II. A disordered region spans residues 27-59 (PPGSEDPEHDDHEGQPRPRVPRKRGHISPKSRP). Residues 45-55 (RVPRKRGHISP) show a composition bias toward basic residues. N-linked (GlcNAc...) asparagine glycans are attached at residues asparagine 62, asparagine 127, asparagine 137, and asparagine 143. The III stretch occupies residues 76–157 (WGVLGQPPNR…LVPPSKAVEF (82 aa)). Positions 158-166 (HQEQQIFIE) are IV (linker domain). Residues 167 to 252 (AKASKIFNCR…HSDTPYYPSG (86 aa)) form a v (Cys-rich) region.

Belongs to the neurexophilin family. In terms of processing, may be proteolytically processed at the boundary between the N-terminal non-conserved and the central conserved domain in neuron-like cells. Highest level in brain, present also in lung, kidney and testis.

It is found in the secreted. Its function is as follows. May be signaling molecules that resemble neuropeptides. Ligand for alpha-neurexins. This chain is Neurexophilin-3 (Nxph3), found in Mus musculus (Mouse).